A 124-amino-acid chain; its full sequence is Small ribosomal subunit protein uS12c (124 aa).

This sequence belongs to the universal ribosomal protein uS12 family. As to quaternary structure, part of the 30S ribosomal subunit.

The protein resides in the plastid. It is found in the chloroplast. In terms of biological role, with S4 and S5 plays an important role in translational accuracy. Located at the interface of the 30S and 50S subunits. This chain is Small ribosomal subunit protein uS12c (rps12), found in Cyanidium caldarium (Red alga).